A 156-amino-acid chain; its full sequence is SPbeta prophage-derived uncharacterized protein YorH (156 aa).

The chain is SPbeta prophage-derived uncharacterized protein YorH (yorH) from Bacillus subtilis (strain 168).